A 1051-amino-acid chain; its full sequence is Ubiquitin-activating enzyme E1 2 (1051 aa).

Residues 1 to 32 (MLPRKREIVAGEVEDLQKKTRAGEGEATREEG) show a composition bias toward basic and acidic residues. The disordered stretch occupies residues 1 to 42 (MLPRKREIVAGEVEDLQKKTRAGEGEATREEGDAAMAGRGNE). Tandem repeats lie at residues 56 to 194 (GRET…GSVF) and 453 to 605 (GSTL…QMVI). The tract at residues 56 to 605 (GRETMKPLFG…GAKCNTQMVI (550 aa)) is 2 approximate repeats. ATP is bound by residues A472, D498, R509, K522, and 570–571 (DN). C626 functions as the Glycyl thioester intermediate in the catalytic mechanism.

The protein belongs to the ubiquitin-activating E1 family. In terms of assembly, monomer.

It carries out the reaction ATP + ubiquitin + [E1 ubiquitin-activating enzyme]-L-cysteine = AMP + diphosphate + S-ubiquitinyl-[E1 ubiquitin-activating enzyme]-L-cysteine.. The protein operates within protein modification; protein ubiquitination. In terms of biological role, activates ubiquitin by first adenylating its C-terminal glycine residue with ATP, and thereafter linking this residue to the side chain of a cysteine residue in E1, yielding a ubiquitin-E1 thioester and free AMP. This Triticum aestivum (Wheat) protein is Ubiquitin-activating enzyme E1 2 (UBA2).